The sequence spans 361 residues: FK506-binding protein 39 kDa (361 aa).

The disordered stretch occupies residues 122–256 (LVDEEDEEEE…PSSPKTRTLK (135 aa)). Positions 123–174 (VDEEDEEEEESDEDYDLSPTEEDLVETVSGDEESEEESESEDNSASEEDELD) are enriched in acidic residues. Serine 192 bears the Phosphoserine mark. Basic and acidic residues predominate over residues 208–227 (QKVEGTPVKEKKVAFAEKLE). At threonine 213 the chain carries Phosphothreonine. The segment covering 241-252 (QASSNAPSSPKT) has biased composition (polar residues). Residue serine 249 is modified to Phosphoserine. A PPIase FKBP-type domain is found at 275–361 (GKKVEMRYIG…VFEVKLVRVH (87 aa)).

It belongs to the FKBP-type PPIase family. FKBP3/4 subfamily.

It is found in the nucleus. Its subcellular location is the nucleolus. It carries out the reaction [protein]-peptidylproline (omega=180) = [protein]-peptidylproline (omega=0). Functionally, PPIase that acts as a histone chaperone. Histone proline isomerase that increases the rate of cis-trans isomerization at prolines on the histone H3 N-terminal tail. Proline isomerization influences H3 methylation thereby regulating gene expression. The sequence is that of FK506-binding protein 39 kDa from Schizosaccharomyces pombe (strain 972 / ATCC 24843) (Fission yeast).